Reading from the N-terminus, the 341-residue chain is Syntaxin-122 (341 aa).

An N-acetylmethionine modification is found at Met-1. 2 disordered regions span residues 1 to 22 (MNDL…PPHS) and 111 to 137 (LDRA…RTSV). Residues 1–284 (MNDLLSGSFK…ARFYQKNTRK (284 aa)) lie on the Cytoplasmic side of the membrane. Polar residues-rich tracts occupy residues 8–21 (SFKT…SPPH) and 126–137 (PGSSSDRQRTSV). Residues 64–185 (CHNLRSSNEQ…GEYPDEATLE (122 aa)) adopt a coiled-coil conformation. The t-SNARE coiled-coil homology domain maps to 213 to 275 (INEIQERHDA…RSGADRLVKA (63 aa)). Residues 285–305 (WTCFAILLLLIIVVLIVVFTV) traverse the membrane as a helical; Anchor for type IV membrane protein segment. The Vesicular portion of the chain corresponds to 306-341 (KPWESNGGGGGGAPRQATPVQAQPPPPPAVNRRLLR). The disordered stretch occupies residues 312 to 341 (GGGGGGAPRQATPVQAQPPPPPAVNRRLLR).

Belongs to the syntaxin family. In terms of assembly, part of the t-SNARE complex.

Its subcellular location is the membrane. Functionally, vesicle trafficking protein that functions in the secretory pathway. This is Syntaxin-122 (SYP122) from Arabidopsis thaliana (Mouse-ear cress).